The chain runs to 411 residues: MRFVAPPPRSGDNSPSPSPSSGISEEILSRSSDPPLEFSPPLIAMVVVLAAAFLFVTYSRLISRRFLSPLFRRFRRWRCRRRRLLHLSSASSASTSSSDLRSFSPFPFDSFHYSSYSPYGLDDSVIKTLPLFLYSAAACTGKPAVGKTSAANCRDCAVCLLEFEEGDYVRTLPLCFHAFHLECIDEWLRSHPNCPLCRTAILGSAGVLTPMSPFVPLMAPRIRPSLDDEENNAIIIRGEITPSRSNWNTIAADTTNDQEIRASVEEQSSPAISRFRELKRSYSFECERESESERVTMEPATVSPWRYRRSTWNKRQSPFGNLISKSRVFSFRYYRSTKSPFFRRRSSAGVFYPISERIPATGSSSRRTKSMTSPMFFRTAPHSSSRLRCGDPEALLSPERWRRRDTCRAEM.

The disordered stretch occupies residues 1-32 (MRFVAPPPRSGDNSPSPSPSSGISEEILSRSS). Low complexity predominate over residues 10–21 (SGDNSPSPSPSS). Residues 36 to 56 (LEFSPPLIAMVVVLAAAFLFV) form a helical membrane-spanning segment. An RING-type; atypical zinc finger spans residues 156–198 (CAVCLLEFEEGDYVRTLPLCFHAFHLECIDEWLRSHPNCPLCR).

The protein belongs to the RING-type zinc finger family. ATL subfamily.

It localises to the membrane. The enzyme catalyses S-ubiquitinyl-[E2 ubiquitin-conjugating enzyme]-L-cysteine + [acceptor protein]-L-lysine = [E2 ubiquitin-conjugating enzyme]-L-cysteine + N(6)-ubiquitinyl-[acceptor protein]-L-lysine.. The protein operates within protein modification; protein ubiquitination. The chain is RING-H2 finger protein ATL65 (ATL65) from Arabidopsis thaliana (Mouse-ear cress).